Reading from the N-terminus, the 647-residue chain is DNA mismatch repair protein MutL (647 aa).

The interval 393 to 423 (VSLVANKQQPTVKQAKRSADDSDSEHGKLDY) is disordered. The segment covering 409–423 (RSADDSDSEHGKLDY) has biased composition (basic and acidic residues).

The protein belongs to the DNA mismatch repair MutL/HexB family.

Functionally, this protein is involved in the repair of mismatches in DNA. It is required for dam-dependent methyl-directed DNA mismatch repair. May act as a 'molecular matchmaker', a protein that promotes the formation of a stable complex between two or more DNA-binding proteins in an ATP-dependent manner without itself being part of a final effector complex. The protein is DNA mismatch repair protein MutL of Streptococcus thermophilus (strain CNRZ 1066).